Reading from the N-terminus, the 207-residue chain is Probable nicotinate-nucleotide adenylyltransferase (207 aa).

It belongs to the NadD family.

The catalysed reaction is nicotinate beta-D-ribonucleotide + ATP + H(+) = deamido-NAD(+) + diphosphate. The protein operates within cofactor biosynthesis; NAD(+) biosynthesis; deamido-NAD(+) from nicotinate D-ribonucleotide: step 1/1. Its function is as follows. Catalyzes the reversible adenylation of nicotinate mononucleotide (NaMN) to nicotinic acid adenine dinucleotide (NaAD). This chain is Probable nicotinate-nucleotide adenylyltransferase, found in Desulfitobacterium hafniense (strain DSM 10664 / DCB-2).